Here is a 355-residue protein sequence, read N- to C-terminus: Putative testis-specific Y-encoded-like protein 3 (355 aa).

Residues 1 to 131 are disordered; it reads MADKRAGTPE…GEEKQEVAAE (131 aa). Residues 93-128 show a composition bias toward basic and acidic residues; it reads ASEKAEDANKEEGAIFKKEPAEEVEKQQEGEEKQEV.

The protein belongs to the nucleosome assembly protein (NAP) family.

The polypeptide is Putative testis-specific Y-encoded-like protein 3 (TSPY26P) (Homo sapiens (Human)).